The following is a 151-amino-acid chain: Probable transport accessory protein MmpS1 (151 aa).

The next 2 helical transmembrane spans lie at 8 to 28 and 81 to 101; these read FWIP…VSRL and VVNA…AVVA.

The protein belongs to the MmpS family.

The protein localises to the cell membrane. This is Probable transport accessory protein MmpS1 (mmpS1) from Mycobacterium tuberculosis (strain CDC 1551 / Oshkosh).